Consider the following 513-residue polypeptide: Putative ribose/galactose/methyl galactoside import ATP-binding protein 2 (513 aa).

2 ABC transporter domains span residues 24-260 (LAAD…VGRE) and 270-510 (VPIG…VMDL). 56–63 (GENGAGKS) contributes to the ATP binding site.

Belongs to the ABC transporter superfamily. Carbohydrate importer 2 (CUT2) (TC 3.A.1.2) family.

Its subcellular location is the cell inner membrane. It catalyses the reaction D-ribose(out) + ATP + H2O = D-ribose(in) + ADP + phosphate + H(+). The catalysed reaction is D-galactose(out) + ATP + H2O = D-galactose(in) + ADP + phosphate + H(+). Part of an ABC transporter complex involved in carbohydrate import. Could be involved in ribose, galactose and/or methyl galactoside import. Responsible for energy coupling to the transport system. The protein is Putative ribose/galactose/methyl galactoside import ATP-binding protein 2 of Agrobacterium fabrum (strain C58 / ATCC 33970) (Agrobacterium tumefaciens (strain C58)).